A 329-amino-acid polypeptide reads, in one-letter code: Vanillate O-demethylase oxygenase subunit (329 aa).

The 84-residue stretch at 1-84 (MICNERMVIY…AQERHGFIWV (84 aa)) folds into the Rieske domain. Residues Cys-24, His-26, Cys-43, and His-46 each coordinate [2Fe-2S] cluster.

The protein belongs to the bacterial ring-hydroxylating dioxygenase alpha subunit family. This demethylase system consists of two proteins: an oxygenase and an oxygenase reductase. It depends on [2Fe-2S] cluster as a cofactor. Fe cation is required as a cofactor.

It carries out the reaction vanillate + NADH + O2 + H(+) = 3,4-dihydroxybenzoate + formaldehyde + NAD(+) + H2O. Its pathway is xenobiotic degradation; vanillyl-alcohol degradation. This chain is Vanillate O-demethylase oxygenase subunit (vanA), found in Pseudomonas sp. (strain ATCC 19151).